The primary structure comprises 89 residues: Small ribosomal subunit protein bS16 (89 aa).

This sequence belongs to the bacterial ribosomal protein bS16 family.

The protein is Small ribosomal subunit protein bS16 of Desulforamulus reducens (strain ATCC BAA-1160 / DSM 100696 / MI-1) (Desulfotomaculum reducens).